A 456-amino-acid chain; its full sequence is tRNA modification GTPase MnmE (456 aa).

The (6S)-5-formyl-5,6,7,8-tetrahydrofolate site is built by arginine 26, glutamate 86, and arginine 125. Residues 222 to 376 (GLSTAIIGRP…IEDRINQLFF (155 aa)) enclose the TrmE-type G domain. A K(+)-binding site is contributed by asparagine 232. GTP is bound by residues 232–237 (NVGKSS), 251–257 (TDIEGTT), and 276–279 (DTAG). Serine 236 is a Mg(2+) binding site. K(+)-binding residues include threonine 251, isoleucine 253, and threonine 256. Threonine 257 is a binding site for Mg(2+). Lysine 456 contacts (6S)-5-formyl-5,6,7,8-tetrahydrofolate.

This sequence belongs to the TRAFAC class TrmE-Era-EngA-EngB-Septin-like GTPase superfamily. TrmE GTPase family. In terms of assembly, homodimer. Heterotetramer of two MnmE and two MnmG subunits. The cofactor is K(+).

It is found in the cytoplasm. Exhibits a very high intrinsic GTPase hydrolysis rate. Involved in the addition of a carboxymethylaminomethyl (cmnm) group at the wobble position (U34) of certain tRNAs, forming tRNA-cmnm(5)s(2)U34. In Streptococcus thermophilus (strain CNRZ 1066), this protein is tRNA modification GTPase MnmE.